A 90-amino-acid chain; its full sequence is Small ribosomal subunit protein bS20 (90 aa).

Positions 1–25 (MANSPSAKKRAKQAEKRRSHNASLR) are disordered. Residues 7-20 (AKKRAKQAEKRRSH) show a composition bias toward basic residues.

It belongs to the bacterial ribosomal protein bS20 family.

Its function is as follows. Binds directly to 16S ribosomal RNA. This is Small ribosomal subunit protein bS20 from Pseudomonas fluorescens (strain Pf0-1).